A 213-amino-acid polypeptide reads, in one-letter code: Uridine kinase (213 aa).

14-21 (GASASGKS) contacts ATP.

Belongs to the uridine kinase family.

The protein localises to the cytoplasm. It catalyses the reaction uridine + ATP = UMP + ADP + H(+). The enzyme catalyses cytidine + ATP = CMP + ADP + H(+). It functions in the pathway pyrimidine metabolism; CTP biosynthesis via salvage pathway; CTP from cytidine: step 1/3. Its pathway is pyrimidine metabolism; UMP biosynthesis via salvage pathway; UMP from uridine: step 1/1. The chain is Uridine kinase from Vibrio parahaemolyticus serotype O3:K6 (strain RIMD 2210633).